The primary structure comprises 54 residues: Metallothionein-2 (54 aa).

This sequence belongs to the metallothionein superfamily. Type 11 family.

In Yarrowia lipolytica (strain CLIB 122 / E 150) (Yeast), this protein is Metallothionein-2 (MTP2).